The primary structure comprises 391 residues: Succinate--CoA ligase [ADP-forming] subunit beta (391 aa).

The ATP-grasp domain maps to 9–245; sequence KQIFAKYGVP…ISEEDADERE (237 aa). ATP-binding positions include Lys-46, 53-55, Glu-99, Ala-102, and Glu-107; that span reads GRG. Asn-200 and Asp-214 together coordinate Mg(2+). Residues Asn-265 and 322 to 324 contribute to the substrate site; that span reads GIV.

It belongs to the succinate/malate CoA ligase beta subunit family. Heterotetramer of two alpha and two beta subunits. Mg(2+) serves as cofactor.

The catalysed reaction is succinate + ATP + CoA = succinyl-CoA + ADP + phosphate. The enzyme catalyses GTP + succinate + CoA = succinyl-CoA + GDP + phosphate. It functions in the pathway carbohydrate metabolism; tricarboxylic acid cycle; succinate from succinyl-CoA (ligase route): step 1/1. Its function is as follows. Succinyl-CoA synthetase functions in the citric acid cycle (TCA), coupling the hydrolysis of succinyl-CoA to the synthesis of either ATP or GTP and thus represents the only step of substrate-level phosphorylation in the TCA. The beta subunit provides nucleotide specificity of the enzyme and binds the substrate succinate, while the binding sites for coenzyme A and phosphate are found in the alpha subunit. The chain is Succinate--CoA ligase [ADP-forming] subunit beta from Sulfurimonas denitrificans (strain ATCC 33889 / DSM 1251) (Thiomicrospira denitrificans (strain ATCC 33889 / DSM 1251)).